Reading from the N-terminus, the 91-residue chain is DNA-directed RNA polymerase subunit omega (91 aa).

Belongs to the RNA polymerase subunit omega family. In terms of assembly, the RNAP catalytic core consists of 2 alpha, 1 beta, 1 beta' and 1 omega subunit. When a sigma factor is associated with the core the holoenzyme is formed, which can initiate transcription.

The catalysed reaction is RNA(n) + a ribonucleoside 5'-triphosphate = RNA(n+1) + diphosphate. Promotes RNA polymerase assembly. Latches the N- and C-terminal regions of the beta' subunit thereby facilitating its interaction with the beta and alpha subunits. This Serratia proteamaculans (strain 568) protein is DNA-directed RNA polymerase subunit omega.